The sequence spans 187 residues: Elongation factor P 1 (187 aa).

The protein belongs to the elongation factor P family.

It localises to the cytoplasm. It functions in the pathway protein biosynthesis; polypeptide chain elongation. Its function is as follows. Involved in peptide bond synthesis. Stimulates efficient translation and peptide-bond synthesis on native or reconstituted 70S ribosomes in vitro. Probably functions indirectly by altering the affinity of the ribosome for aminoacyl-tRNA, thus increasing their reactivity as acceptors for peptidyl transferase. The sequence is that of Elongation factor P 1 from Geobacter sulfurreducens (strain ATCC 51573 / DSM 12127 / PCA).